The primary structure comprises 284 residues: Protein phosphatase 1 regulatory subunit 3B (284 aa).

The PP1-binding motif motif lies at 61 to 64 (RVSF). The region spanning 124–232 (RNRLQTNHVC…SNKGKNYRIT (109 aa)) is the CBM21 domain. Phosphoserine is present on S260.

As to quaternary structure, interacts with glycogen, PPP1CC catalytic subunit of PP1 and PYGL. Associates with glycogen particles. Forms complexes with debranching enzyme, glycogen phosphorylase, glycogen synthase and phosphorylase kinase which is necessary for its regulation of PP1 activity. In terms of tissue distribution, highly expressed in liver. Moderately expressed in kidney, heart, testis, spleen and lung. Weakly expressed in skeletal muscle (at protein level). Expressed predominantly in liver. Expressed moderately in heart. Expressed weakly in lung, kidney, spleen and skeletal muscle.

Its function is as follows. Acts as a glycogen-targeting subunit for phosphatase PP1. Facilitates interaction of the PP1 with enzymes of the glycogen metabolism and regulates its activity. Suppresses the rate at which PP1 dephosphorylates (inactivates) glycogen phosphorylase and enhances the rate at which it activates glycogen synthase and therefore limits glycogen breakdown. Its activity is inhibited by PYGL, resulting in inhibition of the glycogen synthase and glycogen phosphorylase phosphatase activities of PP1. Dramatically increases basal and insulin-stimulated glycogen synthesis upon overexpression in hepatocytes. The polypeptide is Protein phosphatase 1 regulatory subunit 3B (Ppp1r3b) (Rattus norvegicus (Rat)).